A 189-amino-acid polypeptide reads, in one-letter code: Cancer/testis antigen family 45 member A3 (189 aa).

Positions Lys-81–Gln-119 are disordered.

It belongs to the CT45 family. In terms of tissue distribution, testis specific. Expressed in cancer cell lines.

It localises to the nucleus. This Homo sapiens (Human) protein is Cancer/testis antigen family 45 member A3.